The following is a 152-amino-acid chain: Deoxyuridine 5'-triphosphate nucleotidohydrolase (152 aa).

Substrate-binding positions include 65-67 (RSG), asparagine 78, and 82-84 (TID).

The protein belongs to the dUTPase family. Mg(2+) is required as a cofactor.

The catalysed reaction is dUTP + H2O = dUMP + diphosphate + H(+). It functions in the pathway pyrimidine metabolism; dUMP biosynthesis; dUMP from dCTP (dUTP route): step 2/2. Functionally, this enzyme is involved in nucleotide metabolism: it produces dUMP, the immediate precursor of thymidine nucleotides and it decreases the intracellular concentration of dUTP so that uracil cannot be incorporated into DNA. The protein is Deoxyuridine 5'-triphosphate nucleotidohydrolase of Chlorobaculum tepidum (strain ATCC 49652 / DSM 12025 / NBRC 103806 / TLS) (Chlorobium tepidum).